Consider the following 624-residue polypeptide: Probable Xaa-Pro aminopeptidase P (624 aa).

Residues Asp-421, Asp-432, Glu-530, and Glu-544 each contribute to the Mn(2+) site.

Belongs to the peptidase M24B family. Mn(2+) serves as cofactor.

It carries out the reaction Release of any N-terminal amino acid, including proline, that is linked to proline, even from a dipeptide or tripeptide.. Functionally, catalyzes the removal of a penultimate prolyl residue from the N-termini of peptides. The polypeptide is Probable Xaa-Pro aminopeptidase P (AMPP) (Arthroderma otae (strain ATCC MYA-4605 / CBS 113480) (Microsporum canis)).